Consider the following 270-residue polypeptide: 4-hydroxy-tetrahydrodipicolinate reductase (270 aa).

Residues G8–M13, D34, G102–T104, and S128–Y131 contribute to the NAD(+) site. Catalysis depends on H160, which acts as the Proton donor/acceptor. Residue H161 participates in (S)-2,3,4,5-tetrahydrodipicolinate binding. The active-site Proton donor is K164. (S)-2,3,4,5-tetrahydrodipicolinate is bound at residue G170–T171.

It belongs to the DapB family.

Its subcellular location is the cytoplasm. It catalyses the reaction (S)-2,3,4,5-tetrahydrodipicolinate + NAD(+) + H2O = (2S,4S)-4-hydroxy-2,3,4,5-tetrahydrodipicolinate + NADH + H(+). The catalysed reaction is (S)-2,3,4,5-tetrahydrodipicolinate + NADP(+) + H2O = (2S,4S)-4-hydroxy-2,3,4,5-tetrahydrodipicolinate + NADPH + H(+). It participates in amino-acid biosynthesis; L-lysine biosynthesis via DAP pathway; (S)-tetrahydrodipicolinate from L-aspartate: step 4/4. Its function is as follows. Catalyzes the conversion of 4-hydroxy-tetrahydrodipicolinate (HTPA) to tetrahydrodipicolinate. This is 4-hydroxy-tetrahydrodipicolinate reductase from Methanococcus maripaludis (strain C6 / ATCC BAA-1332).